Here is a 470-residue protein sequence, read N- to C-terminus: Ribosomal protein uS12 methylthiotransferase RimO (470 aa).

Residues 1 to 27 (MPCQAPHSDSNVKNPSEATNQKDHSPR) form a disordered region. Polar residues predominate over residues 7–19 (HSDSNVKNPSEAT). Residues 26–141 (PRVGFVSLGC…VMQAVHTHLP (116 aa)) form the MTTase N-terminal domain. Positions 35, 71, 100, 172, 176, and 179 each coordinate [4Fe-4S] cluster. Residues 158-399 (LTPKHYAYLK…MEVAEAVSAR (242 aa)) enclose the Radical SAM core domain. The 69-residue stretch at 402–470 (QRKVGQTLRV…ADGHDLWGEV (69 aa)) folds into the TRAM domain.

It belongs to the methylthiotransferase family. RimO subfamily. It depends on [4Fe-4S] cluster as a cofactor.

Its subcellular location is the cytoplasm. The catalysed reaction is L-aspartate(89)-[ribosomal protein uS12]-hydrogen + (sulfur carrier)-SH + AH2 + 2 S-adenosyl-L-methionine = 3-methylsulfanyl-L-aspartate(89)-[ribosomal protein uS12]-hydrogen + (sulfur carrier)-H + 5'-deoxyadenosine + L-methionine + A + S-adenosyl-L-homocysteine + 2 H(+). Its function is as follows. Catalyzes the methylthiolation of an aspartic acid residue of ribosomal protein uS12. This chain is Ribosomal protein uS12 methylthiotransferase RimO, found in Cupriavidus taiwanensis (strain DSM 17343 / BCRC 17206 / CCUG 44338 / CIP 107171 / LMG 19424 / R1) (Ralstonia taiwanensis (strain LMG 19424)).